The sequence spans 506 residues: DEAD-box ATP-dependent RNA helicase CshA (506 aa).

The short motif at 2–30 is the Q motif element; it reads QNFKELGISDNTVQSLESMGFKEPTPIQK. Residues 33–203 form the Helicase ATP-binding domain; the sequence is IPYALQGIDI…QQFMKSPKII (171 aa). 46–53 is an ATP binding site; the sequence is AQTGTGKT. Positions 150–153 match the DEAD box motif; that stretch reads DEAD. In terms of domain architecture, Helicase C-terminal spans 214–375; it reads QIEEFYTIVK…LRPPHRKEVL (162 aa). A disordered region spans residues 436-506; it reads EKPLSRKGRN…KGRTFADHQK (71 aa). Positions 468-480 are enriched in basic residues; it reads KRSKGYSSKKKST.

Belongs to the DEAD box helicase family. CshA subfamily. As to quaternary structure, oligomerizes, may be a member of the RNA degradosome.

Its subcellular location is the cytoplasm. It catalyses the reaction ATP + H2O = ADP + phosphate + H(+). In terms of biological role, DEAD-box RNA helicase possibly involved in RNA degradation. Unwinds dsRNA in both 5'- and 3'-directions, has RNA-dependent ATPase activity. In Staphylococcus aureus (strain MW2), this protein is DEAD-box ATP-dependent RNA helicase CshA.